The primary structure comprises 332 residues: MKIFINGFGRIGRCVLRAILERNDTNPQLEVIGINDPANWEILAYLLEHDSTHGLLNKEVRYSNGKLIIGSLEIPVFNSIKDLKGVGVIIECSGKFLEPKTLENYLLLGAKKVLLSAPFMGEYDEKQYPTLVYGVNHFLYQNQAIVSNASCTTNAIAPICAILDKAFSIKEGMLTTIHSYTSDQKLIDLAHPLDKRRSRAAASNIIPTTTKAALALHKVLPNLKNKMHGHSVRVPSLDVSMIDLSLFLEKKALKDPINDLLITASKGTLKGVLEIDLKERVSSDFISNPNSVIIAPDLTFTLENMVKIMGWYDNEWGYSNRLVDMAQFMYHY.

NAD(+)-binding positions include Arg-10–Ile-11, Asp-36, Lys-81, and Ser-116. D-glyceraldehyde 3-phosphate is bound by residues Ser-150–Thr-152, Thr-181, Arg-197, Thr-210–Lys-211, and Arg-233. The active-site Nucleophile is Cys-151. Residue Asn-314 participates in NAD(+) binding.

The protein belongs to the glyceraldehyde-3-phosphate dehydrogenase family. Homotetramer.

Its subcellular location is the cytoplasm. It catalyses the reaction D-glyceraldehyde 3-phosphate + phosphate + NAD(+) = (2R)-3-phospho-glyceroyl phosphate + NADH + H(+). It participates in carbohydrate degradation; glycolysis; pyruvate from D-glyceraldehyde 3-phosphate: step 1/5. Its function is as follows. Catalyzes the oxidative phosphorylation of glyceraldehyde 3-phosphate (G3P) to 1,3-bisphosphoglycerate (BPG) using the cofactor NAD. The first reaction step involves the formation of a hemiacetal intermediate between G3P and a cysteine residue, and this hemiacetal intermediate is then oxidized to a thioester, with concomitant reduction of NAD to NADH. The reduced NADH is then exchanged with the second NAD, and the thioester is attacked by a nucleophilic inorganic phosphate to produce BPG. In Helicobacter pylori (strain J99 / ATCC 700824) (Campylobacter pylori J99), this protein is Glyceraldehyde-3-phosphate dehydrogenase (gapA).